The chain runs to 766 residues: Discoidin domain-containing receptor A (766 aa).

The first 18 residues, 1 to 18, serve as a signal peptide directing secretion; it reads MQIALVLLAIYGTTTTNT. The Extracellular segment spans residues 19-372; sequence LRIDQCGENA…PPSSAATQQL (354 aa). 2 F5/8 type C domains span residues 24–180 and 195–351; these read CGEN…IHGC and SRLD…FTSA. A disulfide bridge connects residues Cys24 and Cys180. Residues Asn87, Asn103, Asn129, Asn242, Asn268, Asn311, and Asn353 are each glycosylated (N-linked (GlcNAc...) asparagine). A helical transmembrane segment spans residues 373–393; sequence LVVCGIIFLTIFACVAYCVSV. Topologically, residues 394 to 766 are cytoplasmic; that stretch reads CLKRRQKNKS…FERLVKPFQD (373 aa). Residues 475-501 form a disordered region; it reads NFPPPPEGREEHTYSQPVSPENSSNGS. Residues 488-501 show a composition bias toward polar residues; that stretch reads YSQPVSPENSSNGS. One can recognise a Protein kinase domain in the interval 519–766; sequence LLIGKAIGEG…FERLVKPFQD (248 aa). Residues 525 to 533 and Lys547 contribute to the ATP site; that span reads IGEGKFTMI.

The protein belongs to the protein kinase superfamily. Tyr protein kinase family. Insulin receptor subfamily. In terms of tissue distribution, expressed in neurons in head and tail, some motoneurons in ventral nerve cord, in PVP interneurons, pharynx and stomato-intestinal muscle.

The protein resides in the cell membrane. Its subcellular location is the cell projection. It is found in the axon. The protein localises to the perikaryon. Receptor which, together with svh-4, is involved in axon guidance to establish the tracts for the ventral and dorsal nerve cords during nervous system development. May play a role in axon regeneration following injury in D-type motor neurons. This chain is Discoidin domain-containing receptor A, found in Caenorhabditis elegans.